The sequence spans 123 residues: uncharacterized protein (123 aa).

Transmembrane regions (helical) follow at residues 53–73 (VWFLFLFFIASHINILFFFFL) and 75–95 (VLWFLWCYLCSGLFLFDVFSH).

It is found in the membrane. This is an uncharacterized protein from Saccharomyces cerevisiae (strain ATCC 204508 / S288c) (Baker's yeast).